A 459-amino-acid chain; its full sequence is UDP-N-acetylmuramoylalanine--D-glutamate ligase (459 aa).

119–125 lines the ATP pocket; that stretch reads GTNGKTT.

The protein belongs to the MurCDEF family.

Its subcellular location is the cytoplasm. The catalysed reaction is UDP-N-acetyl-alpha-D-muramoyl-L-alanine + D-glutamate + ATP = UDP-N-acetyl-alpha-D-muramoyl-L-alanyl-D-glutamate + ADP + phosphate + H(+). Its pathway is cell wall biogenesis; peptidoglycan biosynthesis. Its function is as follows. Cell wall formation. Catalyzes the addition of glutamate to the nucleotide precursor UDP-N-acetylmuramoyl-L-alanine (UMA). This is UDP-N-acetylmuramoylalanine--D-glutamate ligase from Lacticaseibacillus paracasei (strain ATCC 334 / BCRC 17002 / CCUG 31169 / CIP 107868 / KCTC 3260 / NRRL B-441) (Lactobacillus paracasei).